The sequence spans 257 residues: Phycoerythrobilin:ferredoxin oxidoreductase (257 aa).

It belongs to the HY2 family.

The catalysed reaction is (3Z)-phycoerythrobilin + oxidized 2[4Fe-4S]-[ferredoxin] = 15,16-dihydrobiliverdin + reduced 2[4Fe-4S]-[ferredoxin] + 2 H(+). Catalyzes the two-electron reduction of the C2 and C3(1) diene system of 15,16-dihydrobiliverdin. This Prochlorococcus marinus subsp. pastoris (strain CCMP1986 / NIES-2087 / MED4) protein is Phycoerythrobilin:ferredoxin oxidoreductase (pebB).